The sequence spans 309 residues: Protein FdhE homolog (309 aa).

It belongs to the FdhE family.

The protein resides in the cytoplasm. In terms of biological role, necessary for formate dehydrogenase activity. In Pasteurella multocida (strain Pm70), this protein is Protein FdhE homolog.